The sequence spans 484 residues: Nuclear rim protein 1 (484 aa).

Residue S3 is modified to Phosphoserine. 2 consecutive transmembrane segments (helical) span residues 145–165 and 252–272; these read FTIF…MFGY and TAIV…AIVF. The tract at residues 416–458 is disordered; the sequence is SSNENLEKGGAFLPNQDQNRPSKSLSPLRKTPLSARQKRFEGS. S417 carries the post-translational modification Phosphoserine. Over residues 430–440 the composition is skewed to polar residues; that stretch reads NQDQNRPSKSL. S474 carries the post-translational modification Phosphoserine.

Belongs to the NUR1 family. In terms of assembly, interacts with CSM1.

It localises to the nucleus membrane. In terms of biological role, member of a perinuclear network that controls recombination at multiple loci to maintain genome stability. Required for rDNA repeat stability. This chain is Nuclear rim protein 1 (NUR1), found in Saccharomyces cerevisiae (strain YJM789) (Baker's yeast).